We begin with the raw amino-acid sequence, 98 residues long: Alpha-elicitin hibernalin (98 aa).

Disulfide bonds link C3-C71, C27-C56, and C51-C95.

Its subcellular location is the secreted. In terms of biological role, induces local and distal defense responses (incompatible hypersensitive reaction) in plants from the solanaceae and cruciferae families. Elicits leaf necrosis and causes the accumulation of pathogenesis-related proteins. Might interact with the lipidic molecules of the plasma membrane. The protein is Alpha-elicitin hibernalin of Phytophthora hibernalis.